An 85-amino-acid polypeptide reads, in one-letter code: Beta-defensin 18 (85 aa).

An N-terminal signal peptide occupies residues 1–23 (MQSAMKLFFIFLIFVFSVSCGPS). Cystine bridges form between Cys39-Cys65, Cys46-Cys60, and Cys50-Cys66.

The protein belongs to the beta-defensin family.

It localises to the secreted. Functionally, has antibacterial activity. This is Beta-defensin 18 (Defb18) from Rattus norvegicus (Rat).